The following is a 330-amino-acid chain: Phytanoyl-CoA hydroxylase-interacting protein (330 aa).

In terms of domain architecture, Fibronectin type-III spans 6 to 115 (TPHSIEINNI…ETVEFCTGDY (110 aa)). N-linked (GlcNAc...) asparagine glycans are attached at residues N14 and N325.

This sequence belongs to the PHYHIP family. Interacts with PHYH and ADGRB1. Highly expressed in the brain.

In terms of biological role, its interaction with PHYH suggests a role in the development of the central system. The polypeptide is Phytanoyl-CoA hydroxylase-interacting protein (PHYHIP) (Homo sapiens (Human)).